The chain runs to 548 residues: Chaperonin GroEL (548 aa).

ATP contacts are provided by residues 29–32 (TLGP), Lys50, 86–90 (DGTTT), Gly413, 479–481 (NAA), and Asp496.

This sequence belongs to the chaperonin (HSP60) family. As to quaternary structure, forms a cylinder of 14 subunits composed of two heptameric rings stacked back-to-back. Interacts with the co-chaperonin GroES.

It localises to the cytoplasm. The catalysed reaction is ATP + H2O + a folded polypeptide = ADP + phosphate + an unfolded polypeptide.. In terms of biological role, together with its co-chaperonin GroES, plays an essential role in assisting protein folding. The GroEL-GroES system forms a nano-cage that allows encapsulation of the non-native substrate proteins and provides a physical environment optimized to promote and accelerate protein folding. This chain is Chaperonin GroEL, found in Deinococcus radiodurans (strain ATCC 13939 / DSM 20539 / JCM 16871 / CCUG 27074 / LMG 4051 / NBRC 15346 / NCIMB 9279 / VKM B-1422 / R1).